A 933-amino-acid polypeptide reads, in one-letter code: Serine/threonine-protein kinase PknD (933 aa).

The Protein kinase domain occupies 4–291; that stretch reads YDIIRMIGKG…ALKADIEQHL (288 aa). Residues 10-18 and Lys33 contribute to the ATP site; that span reads IGKGGMGEV. Asp138 serves as the catalytic Proton acceptor.

The protein belongs to the protein kinase superfamily. Ser/Thr protein kinase family. Autophosphorylated on serine and threonine residues.

It carries out the reaction L-seryl-[protein] + ATP = O-phospho-L-seryl-[protein] + ADP + H(+). The enzyme catalyses L-threonyl-[protein] + ATP = O-phospho-L-threonyl-[protein] + ADP + H(+). Together with the serine/threonine kinase Pkn1, may play a role in the specific interactions with host proteins during intracellular growth. The protein is Serine/threonine-protein kinase PknD of Chlamydia abortus (strain DSM 27085 / S26/3) (Chlamydophila abortus).